Here is a 1571-residue protein sequence, read N- to C-terminus: Disco-interacting protein 2 homolog A (1571 aa).

The 119-residue stretch at 9–127 folds into the DMAP1-binding domain; the sequence is EAAPLPAEVR…KRRSVLVHSS (119 aa). Residues 60-203 form a disordered region; that stretch reads LQAENRIPGP…APSAAATPGA (144 aa). Residues 86–98 show a composition bias toward basic and acidic residues; that stretch reads ASRDERFRSDVHT. A Phosphoserine modification is found at serine 94. Composition is skewed to polar residues over residues 127–139 and 152–162; these read SVET…TSSA and LTSTPLQSHSS. 2 positions are modified to phosphothreonine: threonine 132 and threonine 155. A compositionally biased stretch (low complexity) spans 174–203; sequence SSTSSSASSTSSHPGGRPTTAPSAAATPGA. 2 consecutive short sequence motifs (PXXP motif; required for interaction with CTTN) follow at residues 283–286 and 307–310; these read PKRP and PNQP. A disordered region spans residues 302-327; sequence VQQPDPNQPKPEGSETSVLRGEPLTA.

It belongs to the DIP2 family. In terms of assembly, interacts with FSTL1; DIP2A may act as a cell surface receptor for FSTL1. Interacts (via N-terminus) with CTTN (via SH3 domain); the interaction promotes acetylation of CTTN and is required for proper synaptic transmission. Interacts with SHANK3. In terms of tissue distribution, low expression in all tissues tested.

It is found in the cell membrane. Its subcellular location is the mitochondrion. It localises to the cell projection. The protein resides in the dendritic spine. The catalysed reaction is acetate + ATP + CoA = acetyl-CoA + AMP + diphosphate. Functionally, catalyzes the de novo synthesis of acetyl-CoA in vitro. Promotes acetylation of CTTN, possibly by providing the acetyl donor, ensuring correct dendritic spine morphology and synaptic transmission. Binds to follistatin-related protein FSTL1 and may act as a cell surface receptor for FSTL1, contributing to AKT activation and subsequent FSTL1-induced survival and function of endothelial cells and cardiac myocytes. The protein is Disco-interacting protein 2 homolog A (DIP2A) of Homo sapiens (Human).